The chain runs to 198 residues: Clytin (198 aa).

The propeptide occupies 1–9; it reads MADTASKYA. 4 consecutive EF-hand domains span residues 20 to 55, 60 to 95, 119 to 148, and 149 to 184; these read KWVN…DICA, TPEQ…VDGW, EAVF…SGIC, and SSDE…FWYT. Residues D33, N35, D37, K39, and E44 each contribute to the Ca(2+) site. D126, D128, S130, S132, E137, D162, D164, S166, K168, and E173 together coordinate Ca(2+).

It belongs to the aequorin family.

Ca(2+)-dependent bioluminescence photoprotein. Displays an emission peak at 470 nm (blue light). Trace amounts of calcium ion trigger the intramolecular oxidation of the chromophore, coelenterazine into coelenteramide and CO(2) with the concomitant emission of light. In Clytia gregaria (Gregarious jellyfish), this protein is Clytin.